Consider the following 405-residue polypeptide: Argininosuccinate synthase (405 aa).

8–16 (AYSGGLDTS) is a binding site for ATP. L-citrulline contacts are provided by Y86 and S91. G116 contributes to the ATP binding site. The L-aspartate site is built by T118, N122, and D123. An L-citrulline-binding site is contributed by N122. Residues R126, S175, S184, E260, and Y272 each contribute to the L-citrulline site.

Belongs to the argininosuccinate synthase family. Type 1 subfamily. As to quaternary structure, homotetramer.

The protein resides in the cytoplasm. It catalyses the reaction L-citrulline + L-aspartate + ATP = 2-(N(omega)-L-arginino)succinate + AMP + diphosphate + H(+). It participates in amino-acid biosynthesis; L-arginine biosynthesis; L-arginine from L-ornithine and carbamoyl phosphate: step 2/3. The protein is Argininosuccinate synthase of Koribacter versatilis (strain Ellin345).